A 485-amino-acid chain; its full sequence is Glutamyl-tRNA(Gln) amidotransferase subunit A (485 aa).

Residues K78 and S153 each act as charge relay system in the active site. The Acyl-ester intermediate role is filled by S177.

The protein belongs to the amidase family. GatA subfamily. As to quaternary structure, heterotrimer of A, B and C subunits.

The enzyme catalyses L-glutamyl-tRNA(Gln) + L-glutamine + ATP + H2O = L-glutaminyl-tRNA(Gln) + L-glutamate + ADP + phosphate + H(+). In terms of biological role, allows the formation of correctly charged Gln-tRNA(Gln) through the transamidation of misacylated Glu-tRNA(Gln) in organisms which lack glutaminyl-tRNA synthetase. The reaction takes place in the presence of glutamine and ATP through an activated gamma-phospho-Glu-tRNA(Gln). The protein is Glutamyl-tRNA(Gln) amidotransferase subunit A of Bacillus cereus (strain G9842).